The primary structure comprises 468 residues: MEKNMIGKISQVMGPVVDVDFDGYLPIINEAIEVNINLEGTQTRLVLEVAAHLGDGRVRTIAMDMSEGLVRGMNATATGSPIKVPVGEKVLGRIFNVIGETIDDGEQVTDAPMWSIHRQPPALVEQSTTTEMFETGIKVVDLLAPYSKGGKVGLFGGAGVGKTVIIMELIHNVAMGHDGLSVFAGVGERTREGNDLYHEMKDSNVLDKVALCYGQMSEPPGARNRIALTGLTMAEYFRDEKGLDVLMFVDNIFRFAQSGSEMSALLGRIPSAVGYQPTLAREMGALQDRITSTKNGSITSVQAVYVPADDLTDPAPASVFAHLDATTVLNRKIAEKGIYPAVDPLDSSSRLLDPQILGEEHYNVARGVQQTLQKYKDLQDIIAILGMDELSEDDKNIVERARKIEKFLSQPFFVAEVFTGSPGKYVSLADTIKGFKMILSGECDHMPEGSFYMVGGIDEAIEKAQKMK.

156–163 (GGAGVGKT) serves as a coordination point for ATP.

It belongs to the ATPase alpha/beta chains family. In terms of assembly, F-type ATPases have 2 components, CF(1) - the catalytic core - and CF(0) - the membrane proton channel. CF(1) has five subunits: alpha(3), beta(3), gamma(1), delta(1), epsilon(1). CF(0) has three main subunits: a(1), b(2) and c(9-12). The alpha and beta chains form an alternating ring which encloses part of the gamma chain. CF(1) is attached to CF(0) by a central stalk formed by the gamma and epsilon chains, while a peripheral stalk is formed by the delta and b chains.

The protein resides in the cell inner membrane. The enzyme catalyses ATP + H2O + 4 H(+)(in) = ADP + phosphate + 5 H(+)(out). Functionally, produces ATP from ADP in the presence of a proton gradient across the membrane. The catalytic sites are hosted primarily by the beta subunits. The sequence is that of ATP synthase subunit beta from Sulfurimonas denitrificans (strain ATCC 33889 / DSM 1251) (Thiomicrospira denitrificans (strain ATCC 33889 / DSM 1251)).